A 145-amino-acid polypeptide reads, in one-letter code: D-aminoacyl-tRNA deacylase (145 aa).

The short motif at 137 to 138 (GP) is the Gly-cisPro motif, important for rejection of L-amino acids element.

This sequence belongs to the DTD family. In terms of assembly, homodimer.

Its subcellular location is the cytoplasm. It catalyses the reaction glycyl-tRNA(Ala) + H2O = tRNA(Ala) + glycine + H(+). The enzyme catalyses a D-aminoacyl-tRNA + H2O = a tRNA + a D-alpha-amino acid + H(+). In terms of biological role, an aminoacyl-tRNA editing enzyme that deacylates mischarged D-aminoacyl-tRNAs. Also deacylates mischarged glycyl-tRNA(Ala), protecting cells against glycine mischarging by AlaRS. Acts via tRNA-based rather than protein-based catalysis; rejects L-amino acids rather than detecting D-amino acids in the active site. By recycling D-aminoacyl-tRNA to D-amino acids and free tRNA molecules, this enzyme counteracts the toxicity associated with the formation of D-aminoacyl-tRNA entities in vivo and helps enforce protein L-homochirality. This Yersinia enterocolitica serotype O:8 / biotype 1B (strain NCTC 13174 / 8081) protein is D-aminoacyl-tRNA deacylase.